Here is a 40-residue protein sequence, read N- to C-terminus: U2-ctenitoxin-Pr1a (40 aa).

4 cysteine pairs are disulfide-bonded: cysteine 2–cysteine 17, cysteine 9–cysteine 22, cysteine 16–cysteine 32, and cysteine 24–cysteine 30.

In terms of tissue distribution, expressed by the venom gland.

The protein localises to the secreted. Neurotoxin. In Phoneutria reidyi (Brazilian Amazonian armed spider), this protein is U2-ctenitoxin-Pr1a.